Here is a 78-residue protein sequence, read N- to C-terminus: U29-theraphotoxin-Cg1a (78 aa).

The first 19 residues, 1 to 19 (MRYQTVFWILLIALCTVNP), serve as a signal peptide directing secretion. 4 cysteine pairs are disulfide-bonded: C42-C56, C49-C60, C55-C77, and C67-C73.

This sequence belongs to the neurotoxin 13 (insecticidal toxin ABC) family. 03 (JZTX-59) subfamily. As to expression, expressed by the venom gland.

It is found in the secreted. In terms of biological role, probable ion channel inhibitor. The sequence is that of U29-theraphotoxin-Cg1a from Chilobrachys guangxiensis (Chinese earth tiger tarantula).